The following is a 55-amino-acid chain: Large ribosomal subunit protein bL33 (55 aa).

The protein belongs to the bacterial ribosomal protein bL33 family.

In Maricaulis maris (strain MCS10) (Caulobacter maris), this protein is Large ribosomal subunit protein bL33.